Consider the following 365-residue polypeptide: Alanine racemase (365 aa).

The active-site Proton acceptor; specific for D-alanine is the Lys32. Lys32 carries the post-translational modification N6-(pyridoxal phosphate)lysine. Position 128 (Arg128) interacts with substrate. Tyr257 (proton acceptor; specific for L-alanine) is an active-site residue. Met305 is a substrate binding site.

It belongs to the alanine racemase family. It depends on pyridoxal 5'-phosphate as a cofactor.

It catalyses the reaction L-alanine = D-alanine. Its pathway is amino-acid biosynthesis; D-alanine biosynthesis; D-alanine from L-alanine: step 1/1. In terms of biological role, catalyzes the interconversion of L-alanine and D-alanine. May also act on other amino acids. This chain is Alanine racemase (alr), found in Francisella tularensis subsp. tularensis (strain SCHU S4 / Schu 4).